Consider the following 422-residue polypeptide: UDP-N-acetylglucosamine 1-carboxyvinyltransferase (422 aa).

22–23 (KN) contributes to the phosphoenolpyruvate binding site. Position 95 (arginine 95) interacts with UDP-N-acetyl-alpha-D-glucosamine. The active-site Proton donor is the cysteine 119. Cysteine 119 bears the 2-(S-cysteinyl)pyruvic acid O-phosphothioketal mark. UDP-N-acetyl-alpha-D-glucosamine is bound by residues 124 to 128 (RPIDQ), aspartate 309, and valine 331.

This sequence belongs to the EPSP synthase family. MurA subfamily.

The protein resides in the cytoplasm. It carries out the reaction phosphoenolpyruvate + UDP-N-acetyl-alpha-D-glucosamine = UDP-N-acetyl-3-O-(1-carboxyvinyl)-alpha-D-glucosamine + phosphate. It functions in the pathway cell wall biogenesis; peptidoglycan biosynthesis. In terms of biological role, cell wall formation. Adds enolpyruvyl to UDP-N-acetylglucosamine. The sequence is that of UDP-N-acetylglucosamine 1-carboxyvinyltransferase from Anaeromyxobacter dehalogenans (strain 2CP-C).